The following is an 829-amino-acid chain: MKMTRRAFVKANAAASAAAVAGITLPASAANLIASSDQTKITWDKAPCRFCGTGCSVLVGTQNGKVVATQGDPEAPVNKGLNCIKGYFLSKIMYGQDRLTQPLLRMKDGKYDKEGDFTPVSWDVAFDTMAEKWKASLAKKGPTSIGMFGSGQWTVMEGYAAAKMMKAGFRSNNIDPNARHCMASAVVGFMRTFGIDEPMGCYDDFEHADSFVLWGSNMAEMHPVLWTRITDRRLSHPHVKVNVLSTYYHRSFELADSGYIFKPQSDLAIANFIANYIIQNDAVNWDFVNKHTNFKQATTDIGYGLRDDDPLQKQAKNPNSGNMTSISFEEYKKSVAPYTVEKASEMSGVAQDKLIELAKQYADPNTKVMSLWTMGMNQHTRGVWMNSLVYNIHLLTGKISTPGNSPFSLTGQPSACGTAREVGTFAHRLPADMVVANPKHRAIAEKIWKLPEGTIPPKPGFHAVLQDRMLHDGVLNCYWVQCNNNMQAGPNINGERLPGYRNPENFIVVSDPYPTATAQAADLILPTAMWIEKEGAYGNAERRTQAWYQQVGTVGEAKSDLWQVMEFSKRFKMEEVWPEELLAKAPQYRGKTMYDMLFANGQVDKFPLSEARQLNDDSHHFGFYVQKGLFEEYAEFGRGHGHDLAPYDVYHTVRGLRWPVVDGKETLWRYKEGSDPYAKKGSGWDFYGKPDGKALIISAPYEAPPESPDAEYDMWLCTGRVLEHWHTGTMTRRVPELYKAVPDAVCYIHPEDAKARGLRRGDEVLISNKRGEVRVRVETRGRNRPPQGLVFVPFFDARILINKLILDATDPLSKQTDFKKCPVKITKVA.

The segment at residues 1-30 (MKMTRRAFVKANAAASAAAVAGITLPASAA) is a signal peptide (tat-type signal). The region spanning 41-97 (ITWDKAPCRFCGTGCSVLVGTQNGKVVATQGDPEAPVNKGLNCIKGYFLSKIMYGQD) is the 4Fe-4S Mo/W bis-MGD-type domain. Positions 48, 51, 55, and 83 each coordinate [4Fe-4S] cluster. Mo-bis(molybdopterin guanine dinucleotide) is bound by residues Lys85, Gln152, Asn177, Cys181, 214-221 (WGSNMAEM), 245-249 (STYYH), 264-266 (QSD), Met374, Gln378, Asn484, 510-511 (SD), Lys533, Asp560, and 718-727 (TGRVLEHWHT). Phe794 serves as a coordination point for substrate. Mo-bis(molybdopterin guanine dinucleotide)-binding residues include Asn802 and Lys819.

This sequence belongs to the prokaryotic molybdopterin-containing oxidoreductase family. NasA/NapA/NarB subfamily. In terms of assembly, component of the periplasmic nitrate reductase NapAB complex composed of NapA and NapB. [4Fe-4S] cluster is required as a cofactor. Mo-bis(molybdopterin guanine dinucleotide) serves as cofactor. In terms of processing, predicted to be exported by the Tat system. The position of the signal peptide cleavage has not been experimentally proven.

The protein localises to the periplasm. The enzyme catalyses 2 Fe(II)-[cytochrome] + nitrate + 2 H(+) = 2 Fe(III)-[cytochrome] + nitrite + H2O. Its function is as follows. Catalytic subunit of the periplasmic nitrate reductase complex NapAB. Receives electrons from NapB and catalyzes the reduction of nitrate to nitrite. This Vibrio vulnificus (strain CMCP6) protein is Periplasmic nitrate reductase.